We begin with the raw amino-acid sequence, 619 residues long: Replication restart protein PriA (619 aa).

Residues 119 to 285 form the Helicase ATP-binding domain; that stretch reads LKELQKHPAS…KDKALVRLKG (167 aa). 132 to 139 is a binding site for ATP; the sequence is GDTGSGKT. Positions 228–231 match the DEAH box motif; it reads DEEH. Residues Cys-336, Cys-339, Cys-345, Cys-348, Cys-363, Cys-366, Cys-376, and Cys-379 each coordinate Zn(2+). The Helicase C-terminal domain maps to 371–532; sequence PIPKICNACQ…ELYPPFSRLC (162 aa).

The protein belongs to the helicase family. PriA subfamily. Component of the replication restart primosome. The cofactor is Zn(2+).

It carries out the reaction Couples ATP hydrolysis with the unwinding of duplex DNA by translocating in the 3'-5' direction.. The catalysed reaction is ATP + H2O = ADP + phosphate + H(+). Functionally, initiates the restart of stalled replication forks, which reloads the replicative helicase on sites other than the origin of replication. Recognizes and binds to abandoned replication forks and remodels them to uncover a helicase loading site. Promotes assembly of the primosome at these replication forks. In Helicobacter pylori (strain J99 / ATCC 700824) (Campylobacter pylori J99), this protein is Replication restart protein PriA.